A 1550-amino-acid polypeptide reads, in one-letter code: MDPSAPQPRAETSGKDIWHPGERCLAPSPDNGKLCEASIKSITVDENGKSFAVVLYADFQERKIPLKQLQEVKFVKDCPRNLIFDDEDLEKPYFPNRKFPSSSVAFKLSDNGDSIPYTINRYLRDYQREGTRFLYGHYIHGGGCILGDDMGLGKTVQVISFLAAVLHKKGTREDIENNMPEFLLRSMKKEPLSSTAKKMFLIVAPLSVLYNWKDELDTWGYFRVTVLHGNRKDNELIRVKQRKCEIALTTYETLRLCLDELNSLEWSAVIVDEAHRIKNPKARVTEVMKALKCNVRIGLTGTILQNNMKELWCVMDWAVPGLLGSGTYFKKQFSDPVEHGQRHTATKRELATGRKAMQRLAKKMSGWFLRRTKTLIKDQLPKKEDRMVYCSLTDFQKAVYQTVLETEDVTLILQSSEPCTCRSGQKRRNCCYKTNSHGETVKTLYLSYLTVLQKVANHVALLQAASTSKQQETLIKRICDQVFSRFPDFVQKSKDAAFETLSDPKYSGKMKVLQQLLNHCRKNRDKVLLFSFSTKLLDVLQQYCMASGLDYRRLDGSTKSEERLKIVKEFNSTQDVNICLVSTMAGGLGLNFVGANVVVLFDPTWNPANDLQAIDRAYRIGQCRDVKVLRLISLGTVEEIMYLRQIYKQQLHCVVVGSENAKRYFEAVQGSKEHQGELFGIHNLFKFRSQGSCLTKDILEREGQVEAGIMTATTWLKEGPPAHKLEMPRQPDCQECRGTEQAAEPLAKEACDLCSDFSDEEPVGATGIKTAKNKAPDSSKASSSPGQLTLLQCGFSKLLETKCKAVEDSDGNTASDDESSDEQPTCLSTEAKDAGCEKNQDSLGTSKHQKLDNILNPKEKHIFYKSEKILEQNISSKSDEKKIKNTDKHCILQNVTESEDSDVICPTQYTTERFPDNSIRFKPPLEGSEDSETEHTVKTRNNDNSRNTDDKRNGIISKKLSPENTTLKSILKRKGTSDISDESDDIEISSKSRVRKRASSLRFKRIKETKKELHNSPKTMNKTNQVYAANEDHNSQFIDDYSSSDESLSVSHFSFSKQSHRPRTIRDRTSFSSKLPSHNKKNSTFIPRKPMKCSNEKVVNQEQSYESMDKFLDGVQEVAYIHSNQNVIGSSKAENHMSRWAAHDVFELKQFSQLPANIAVCSSKTYKEKVDADTLPHTKKGQQPSEGSISLPLYISNPVNQKKKKVYHTNQTTFIIGETPKGIRRKQFEEMASYFNSSSVNEFAKHITNATSEERQKMLRDFYASQYPEVKEFFVDSVSQFNNSSFEKGEQRTRKKSDKRESLIKPRLSDSETLSFKDSTNKISQVCSLKTYKRKSVKFQNHISYREEVFFNDAETKKSPVSSTQEIDSGKNSQASEDTVTSRSLNSESETRERRLENTMKDQQDLTRTGISRKEPLLKLENKKIENPVLENTSVISLLGDTSILDDLFKSHGNSPTQLPKKVLSGPMEKAKQRPKDFWDILNEQNDESLSKLTDLAVIETLCEKAPLAAPFKRREEPATSLWKSNEKFLWKKFSPSDTDENATNTQSTT.

Positions 1 to 23 are disordered; that stretch reads MDPSAPQPRAETSGKDIWHPGER. Positions 12–22 are enriched in basic and acidic residues; it reads TSGKDIWHPGE. The Helicase ATP-binding domain maps to 135 to 321; sequence YGHYIHGGGC…WCVMDWAVPG (187 aa). ATP is bound at residue 148–155; it reads DDMGLGKT. The DEAH box motif lies at 272-275; it reads DEAH. Positions 512-662 constitute a Helicase C-terminal domain; it reads VLQQLLNHCR…CVVVGSENAK (151 aa). Positions 785–796 match the Atypical PIP-box motif; that stretch reads PGQLTLLQCGFS. Disordered stretches follow at residues 808-848, 914-1002, and 1354-1410; these read DSDG…TSKH, FPDN…SSLR, and AETK…TRTG. Composition is skewed to basic and acidic residues over residues 830–840 and 933–953; these read EAKDAGCEKNQ and TEHTVKTRNNDNSRNTDDKRN. A phosphoserine mark is found at Ser-980 and Ser-983. Residues 992 to 1002 show a composition bias toward basic residues; it reads SRVRKRASSLR. Residues 1359–1388 show a composition bias toward polar residues; sequence SPVSSTQEIDSGKNSQASEDTVTSRSLNSE. 2 positions are modified to phosphoserine: Ser-1373 and Ser-1376. A compositionally biased stretch (basic and acidic residues) spans 1389-1405; sequence SETRERRLENTMKDQQD.

This sequence belongs to the SNF2/RAD54 helicase family. In terms of assembly, interacts with NEK6. Interacts (via an atypical PIP-box) with PCNA; this interaction facilitates cenrtomeric localization of ERCC6L2. Interacts with CYREN; this interaction is DNA independent. Interacts with XRCC6 and XRCC5. In terms of processing, phosphorylated by NEK6. In terms of tissue distribution, expressed in bone marrow (at protein level).

The protein localises to the nucleus. It is found in the cytoplasm. Its subcellular location is the cytoskeleton. It localises to the microtubule organizing center. The protein resides in the centrosome. The protein localises to the mitochondrion. It is found in the chromosome. Its subcellular location is the centromere. Its function is as follows. Promotes double-strand break (DSB) end-joining and facilitates programmed recombination by controlling how DNA ends are joined in a spatially oriented manner during repair. Also plays a role in DNA repair by restricting DNA end resection in double strand break (DSB) repair. Facilitates replication of complex DNA regions and regulates the maintenance of chromatin structure. This Homo sapiens (Human) protein is DNA excision repair protein ERCC-6-like 2.